Reading from the N-terminus, the 202-residue chain is Nascent polypeptide-associated complex subunit alpha (202 aa).

Residues 1–19 show a composition bias toward basic and acidic residues; the sequence is MADPRVEELPDEEVPKTNV. The tract at residues 1–42 is disordered; that stretch reads MADPRVEELPDEEVPKTNVEDAGSSSESEAGDEPTIPGGAAV. The region spanning 46–111 is the NAC-A/B domain; that stretch reads SRNEKKARKA…AKIEDLNATA (66 aa). A compositionally biased stretch (low complexity) spans 117–126; that stretch reads QQLAEAAANE. Positions 117–165 are disordered; it reads QQLAEAAANEHAGHDHEHDHGKGKAPEAEAKKEEEEDDGEEVDESGLEA. The segment covering 127–149 has biased composition (basic and acidic residues); the sequence is HAGHDHEHDHGKGKAPEAEAKKE. Acidic residues predominate over residues 150 to 162; that stretch reads EEEDDGEEVDESG. One can recognise a UBA domain in the interval 163-202; sequence LEAKDIELVMAQANVSRKKAVKALRENDNDIVNSIMALSI.

It belongs to the NAC-alpha family. Part of the nascent polypeptide-associated complex (NAC), consisting of egd2 and egd1. NAC associates with ribosomes via egd1.

The protein localises to the cytoplasm. The protein resides in the nucleus. Functionally, component of the nascent polypeptide-associated complex (NAC), a dynamic component of the ribosomal exit tunnel, protecting the emerging polypeptides from interaction with other cytoplasmic proteins to ensure appropriate nascent protein targeting. The NAC complex also promotes mitochondrial protein import by enhancing productive ribosome interactions with the outer mitochondrial membrane and blocks the inappropriate interaction of ribosomes translating non-secretory nascent polypeptides with translocation sites in the membrane of the endoplasmic reticulum. Egd2 may also be involved in transcription regulation. This is Nascent polypeptide-associated complex subunit alpha (egd2) from Aspergillus niger (strain ATCC MYA-4892 / CBS 513.88 / FGSC A1513).